We begin with the raw amino-acid sequence, 137 residues long: Large ribosomal subunit protein uL14 (137 aa).

Belongs to the universal ribosomal protein uL14 family. As to quaternary structure, component of the large ribosomal subunit. Mature ribosomes consist of a small (40S) and a large (60S) subunit. The 40S subunit contains about 32 different proteins and 1 molecule of RNA (18S). The 60S subunit contains 45 different proteins and 3 molecules of RNA (25S, 5.8S and 5S).

The protein resides in the cytoplasm. In terms of biological role, component of the ribosome, a large ribonucleoprotein complex responsible for the synthesis of proteins in the cell. The small ribosomal subunit (SSU) binds messenger RNAs (mRNAs) and translates the encoded message by selecting cognate aminoacyl-transfer RNA (tRNA) molecules. The large subunit (LSU) contains the ribosomal catalytic site termed the peptidyl transferase center (PTC), which catalyzes the formation of peptide bonds, thereby polymerizing the amino acids delivered by tRNAs into a polypeptide chain. The nascent polypeptides leave the ribosome through a tunnel in the LSU and interact with protein factors that function in enzymatic processing, targeting, and the membrane insertion of nascent chains at the exit of the ribosomal tunnel. The chain is Large ribosomal subunit protein uL14 from Candida albicans (strain SC5314 / ATCC MYA-2876) (Yeast).